We begin with the raw amino-acid sequence, 431 residues long: Serine hydroxymethyltransferase (431 aa).

(6S)-5,6,7,8-tetrahydrofolate is bound by residues Leu-128 and 132-134 (GHL). Lys-237 carries the post-translational modification N6-(pyridoxal phosphate)lysine.

Belongs to the SHMT family. As to quaternary structure, homodimer. It depends on pyridoxal 5'-phosphate as a cofactor.

The protein localises to the cytoplasm. It catalyses the reaction (6R)-5,10-methylene-5,6,7,8-tetrahydrofolate + glycine + H2O = (6S)-5,6,7,8-tetrahydrofolate + L-serine. The protein operates within one-carbon metabolism; tetrahydrofolate interconversion. Its pathway is amino-acid biosynthesis; glycine biosynthesis; glycine from L-serine: step 1/1. Its function is as follows. Catalyzes the reversible interconversion of serine and glycine with tetrahydrofolate (THF) serving as the one-carbon carrier. This reaction serves as the major source of one-carbon groups required for the biosynthesis of purines, thymidylate, methionine, and other important biomolecules. Also exhibits THF-independent aldolase activity toward beta-hydroxyamino acids, producing glycine and aldehydes, via a retro-aldol mechanism. This Ruegeria sp. (strain TM1040) (Silicibacter sp.) protein is Serine hydroxymethyltransferase.